Here is a 617-residue protein sequence, read N- to C-terminus: Dihydroxy-acid dehydratase (617 aa).

Asp-81 serves as a coordination point for Mg(2+). Residue Cys-122 participates in [2Fe-2S] cluster binding. Residues Asp-123 and Lys-124 each coordinate Mg(2+). Lys-124 carries the N6-carboxylysine modification. Residue Cys-195 participates in [2Fe-2S] cluster binding. Residue Glu-492 participates in Mg(2+) binding. Ser-518 acts as the Proton acceptor in catalysis.

The protein belongs to the IlvD/Edd family. Homodimer. The cofactor is [2Fe-2S] cluster. Mg(2+) is required as a cofactor.

It catalyses the reaction (2R)-2,3-dihydroxy-3-methylbutanoate = 3-methyl-2-oxobutanoate + H2O. The enzyme catalyses (2R,3R)-2,3-dihydroxy-3-methylpentanoate = (S)-3-methyl-2-oxopentanoate + H2O. It participates in amino-acid biosynthesis; L-isoleucine biosynthesis; L-isoleucine from 2-oxobutanoate: step 3/4. Its pathway is amino-acid biosynthesis; L-valine biosynthesis; L-valine from pyruvate: step 3/4. Functionally, functions in the biosynthesis of branched-chain amino acids. Catalyzes the dehydration of (2R,3R)-2,3-dihydroxy-3-methylpentanoate (2,3-dihydroxy-3-methylvalerate) into 2-oxo-3-methylpentanoate (2-oxo-3-methylvalerate) and of (2R)-2,3-dihydroxy-3-methylbutanoate (2,3-dihydroxyisovalerate) into 2-oxo-3-methylbutanoate (2-oxoisovalerate), the penultimate precursor to L-isoleucine and L-valine, respectively. This Buchnera aphidicola subsp. Cinara cedri (strain Cc) protein is Dihydroxy-acid dehydratase.